Reading from the N-terminus, the 111-residue chain is Cell cycle protein GpsB (111 aa).

A coiled-coil region spans residues 38–72 (IKDYEAFHKEFEQLKQQNARLKRELEEQKLAATQV).

This sequence belongs to the GpsB family. In terms of assembly, forms polymers through the coiled coil domains. Interacts with PBP1, MreC and EzrA.

Its subcellular location is the cytoplasm. In terms of biological role, divisome component that associates with the complex late in its assembly, after the Z-ring is formed, and is dependent on DivIC and PBP2B for its recruitment to the divisome. Together with EzrA, is a key component of the system that regulates PBP1 localization during cell cycle progression. Its main role could be the removal of PBP1 from the cell pole after pole maturation is completed. Also contributes to the recruitment of PBP1 to the division complex. Not essential for septum formation. This is Cell cycle protein GpsB from Bacillus cereus (strain ATCC 10987 / NRS 248).